Reading from the N-terminus, the 284-residue chain is 2-dehydro-3-deoxyphosphooctonate aldolase (284 aa).

Belongs to the KdsA family.

The protein localises to the cytoplasm. It catalyses the reaction D-arabinose 5-phosphate + phosphoenolpyruvate + H2O = 3-deoxy-alpha-D-manno-2-octulosonate-8-phosphate + phosphate. The protein operates within carbohydrate biosynthesis; 3-deoxy-D-manno-octulosonate biosynthesis; 3-deoxy-D-manno-octulosonate from D-ribulose 5-phosphate: step 2/3. It functions in the pathway bacterial outer membrane biogenesis; lipopolysaccharide biosynthesis. The protein is 2-dehydro-3-deoxyphosphooctonate aldolase of Bordetella petrii (strain ATCC BAA-461 / DSM 12804 / CCUG 43448).